A 202-amino-acid chain; its full sequence is Dephospho-CoA kinase (202 aa).

Residues 5–202 (IVGLTGGIAS…DADYRARANP (198 aa)) form the DPCK domain. An ATP-binding site is contributed by 13 to 18 (ASGKSA).

It belongs to the CoaE family.

Its subcellular location is the cytoplasm. The enzyme catalyses 3'-dephospho-CoA + ATP = ADP + CoA + H(+). Its pathway is cofactor biosynthesis; coenzyme A biosynthesis; CoA from (R)-pantothenate: step 5/5. Catalyzes the phosphorylation of the 3'-hydroxyl group of dephosphocoenzyme A to form coenzyme A. In Xanthomonas axonopodis pv. citri (strain 306), this protein is Dephospho-CoA kinase.